The following is a 730-amino-acid chain: DNA ligase (730 aa).

Positions 1 to 23 are disordered; that stretch reads MAGEQHAQPTSVPAEAREKHAQL. Residues 44-48, 93-94, and E124 contribute to the NAD(+) site; these read DAEFD and SL. Catalysis depends on K126, which acts as the N6-AMP-lysine intermediate. Residues R147, E184, K300, and K324 each contribute to the NAD(+) site. Positions 418, 421, 437, and 443 each coordinate Zn(2+). Positions 638–727 constitute a BRCT domain; it reads EGPRPLEGLT…PEAAAEVALP (90 aa).

It belongs to the NAD-dependent DNA ligase family. LigA subfamily. Mg(2+) is required as a cofactor. The cofactor is Mn(2+).

The catalysed reaction is NAD(+) + (deoxyribonucleotide)n-3'-hydroxyl + 5'-phospho-(deoxyribonucleotide)m = (deoxyribonucleotide)n+m + AMP + beta-nicotinamide D-nucleotide.. Functionally, DNA ligase that catalyzes the formation of phosphodiester linkages between 5'-phosphoryl and 3'-hydroxyl groups in double-stranded DNA using NAD as a coenzyme and as the energy source for the reaction. It is essential for DNA replication and repair of damaged DNA. In Streptomyces avermitilis (strain ATCC 31267 / DSM 46492 / JCM 5070 / NBRC 14893 / NCIMB 12804 / NRRL 8165 / MA-4680), this protein is DNA ligase.